Consider the following 78-residue polypeptide: RNA-binding protein KhpA (78 aa).

One can recognise a KH domain in the interval 29-78 (TIIYELTVAKGDIGKIIGKEGRTIKAIRTLLVSVASRDNVKVSLEIMEER).

Belongs to the KhpA RNA-binding protein family.

Its subcellular location is the cytoplasm. A probable RNA-binding protein. The chain is RNA-binding protein KhpA from Chlamydia muridarum (strain MoPn / Nigg).